A 122-amino-acid polypeptide reads, in one-letter code: Large ribosomal subunit protein uL14c (122 aa).

Belongs to the universal ribosomal protein uL14 family. In terms of assembly, part of the 50S ribosomal subunit.

It localises to the plastid. It is found in the chloroplast. Functionally, binds to 23S rRNA. This is Large ribosomal subunit protein uL14c from Chara vulgaris (Common stonewort).